A 126-amino-acid polypeptide reads, in one-letter code: MNNCATFSMPHSNATNHTTLSHPVCNNNANCFTRSELYAIWSETINTLKRTFKIKNVHAHMLEDDSGEIKDYIRANLSRFTVITGKCSKRKVCHHDKRIARTLHLEKNLVDEYACSVTHVYSAPKW.

This sequence belongs to the baculoviridae LEF-11 family.

Involved in late/very late gene activation. In Epiphyas postvittana nucleopolyhedrovirus (EppoMNPV), this protein is Late expression factor 11 (LEF-11).